A 127-amino-acid chain; its full sequence is uncharacterized protein (127 aa).

The signal sequence occupies residues 1–16; sequence MIKKIIFGIAILLSTS. Residue Cys-17 is the site of N-palmitoyl cysteine attachment. Cys-17 carries the S-diacylglycerol cysteine lipid modification. Residues 56–101 adopt a coiled-coil conformation; it reads EVREEIQKYRVAIVKINKKKRELYNRLSKEAQNFLAEQQKYKQKLS. Residues 107–118 are compositionally biased toward polar residues; it reads VENDQKNNTADS. Residues 107-127 are disordered; the sequence is VENDQKNNTADSNDNKSKDTK.

It localises to the cell membrane. This is an uncharacterized protein from Rickettsia conorii (strain ATCC VR-613 / Malish 7).